Reading from the N-terminus, the 520-residue chain is MATVREKAVSLNLCATYSPAQRPPGPNGSHRPFRATYIWSSIIQALTQVEVKKRRHHLKYHHDCFIGSEAVDVVFAHLVQHKYFGDTEIPRSKVVRVCQALMDCKVFEPIVTACMFGREKKRTVFEDSSCSLYRFINNSSHLGAQVEKSNGRCTPQRPKHSSFQSAPLKSPSLEDLWDNLSLTAADPTHINLTANLPPKVVGEVWQEQTIRRLLQLVDLPLLDSLLEYTPVAPRIPQVKEEELNLTSNYLDREILKAFSDAQADEWVSAAVDCLDFLPDHMVVDVSRNLPEQQAPDSKWKLLLFDTIGKHYQNRSPLLRNQLFDIHTGIAELLVNGKNEPALEATQLCLKLLDSPSREEFRRLLYFMALAADPSEFRLHEETDNRMTVKRMFSRAVVCNKNLSKGKCDLLVLFILDHHKDVFKIPGSLHKMVSDKLVAIQQGSDPDRDTGYTFCQRVDKREFDSATQNNTRTELCALLKTIYENTSLSPKEKKRLLGQFYKSHPETFIQYFGDRVSSVYT.

Residues Ala45 to Asn137 enclose the DEP domain. The disordered stretch occupies residues Lys148 to Pro167.

The protein belongs to the DEPDC7 family.

This is DEP domain-containing protein 7 (depdc7) from Xenopus tropicalis (Western clawed frog).